The primary structure comprises 207 residues: Guanylate kinase (207 aa).

A Guanylate kinase-like domain is found at 4-184 (GTLYIVSAPS…AQMDFRSIIR (181 aa)). 11-18 (APSGAGKS) is a binding site for ATP.

Belongs to the guanylate kinase family.

It is found in the cytoplasm. The catalysed reaction is GMP + ATP = GDP + ADP. Functionally, essential for recycling GMP and indirectly, cGMP. The polypeptide is Guanylate kinase (Aliivibrio fischeri (strain ATCC 700601 / ES114) (Vibrio fischeri)).